Reading from the N-terminus, the 890-residue chain is Protein translocase subunit SecA (890 aa).

ATP contacts are provided by residues glutamine 86, 104–108, and aspartate 493; that span reads GEGKT. A compositionally biased stretch (basic and acidic residues) spans 851-872; the sequence is EASHGDGDAKKAPVVKKEESGR. The interval 851–873 is disordered; sequence EASHGDGDAKKAPVVKKEESGRN. Zn(2+) contacts are provided by cysteine 876, cysteine 878, cysteine 887, and cysteine 888.

It belongs to the SecA family. Monomer and homodimer. Part of the essential Sec protein translocation apparatus which comprises SecA, SecYEG and auxiliary proteins SecDF. Other proteins may also be involved. The cofactor is Zn(2+).

The protein resides in the cell membrane. It is found in the cytoplasm. It catalyses the reaction ATP + H2O + cellular proteinSide 1 = ADP + phosphate + cellular proteinSide 2.. Its function is as follows. Part of the Sec protein translocase complex. Interacts with the SecYEG preprotein conducting channel. Has a central role in coupling the hydrolysis of ATP to the transfer of proteins into and across the cell membrane, serving as an ATP-driven molecular motor driving the stepwise translocation of polypeptide chains across the membrane. The chain is Protein translocase subunit SecA from Alkaliphilus oremlandii (strain OhILAs) (Clostridium oremlandii (strain OhILAs)).